We begin with the raw amino-acid sequence, 339 residues long: Ketol-acid reductoisomerase (NADP(+)) (339 aa).

Residues 1–182 (MRVYYDRDAD…GGGRSGVIET (182 aa)) form the KARI N-terminal Rossmann domain. NADP(+)-binding positions include 24 to 27 (YGSQ), R48, S51, T53, and 83 to 86 (DELQ). H108 is a catalytic residue. G134 contributes to the NADP(+) binding site. One can recognise a KARI C-terminal knotted domain in the interval 183–328 (TFKEECETDL…GKLRAMMPWI (146 aa)). The Mg(2+) site is built by D191, E195, E227, and E231. A substrate-binding site is contributed by S252.

This sequence belongs to the ketol-acid reductoisomerase family. Mg(2+) serves as cofactor.

It carries out the reaction (2R)-2,3-dihydroxy-3-methylbutanoate + NADP(+) = (2S)-2-acetolactate + NADPH + H(+). It catalyses the reaction (2R,3R)-2,3-dihydroxy-3-methylpentanoate + NADP(+) = (S)-2-ethyl-2-hydroxy-3-oxobutanoate + NADPH + H(+). Its pathway is amino-acid biosynthesis; L-isoleucine biosynthesis; L-isoleucine from 2-oxobutanoate: step 2/4. It participates in amino-acid biosynthesis; L-valine biosynthesis; L-valine from pyruvate: step 2/4. Its function is as follows. Involved in the biosynthesis of branched-chain amino acids (BCAA). Catalyzes an alkyl-migration followed by a ketol-acid reduction of (S)-2-acetolactate (S2AL) to yield (R)-2,3-dihydroxy-isovalerate. In the isomerase reaction, S2AL is rearranged via a Mg-dependent methyl migration to produce 3-hydroxy-3-methyl-2-ketobutyrate (HMKB). In the reductase reaction, this 2-ketoacid undergoes a metal-dependent reduction by NADPH to yield (R)-2,3-dihydroxy-isovalerate. This chain is Ketol-acid reductoisomerase (NADP(+)), found in Brucella canis (strain ATCC 23365 / NCTC 10854 / RM-666).